A 317-amino-acid chain; its full sequence is Protoheme IX farnesyltransferase (317 aa).

The next 8 membrane-spanning stretches (helical) occupy residues 25–45, 54–74, 126–146, 154–174, 181–201, 227–244, 249–271, and 281–301; these read FFAL…LVGM, PVIA…SGCL, LAAG…SMWL, IVIG…VVTG, LVLF…LALV, IVAY…PVAL, LIYG…QVYH, and AAMG…SALL.

Belongs to the UbiA prenyltransferase family. Protoheme IX farnesyltransferase subfamily.

Its subcellular location is the cell inner membrane. The catalysed reaction is heme b + (2E,6E)-farnesyl diphosphate + H2O = Fe(II)-heme o + diphosphate. Its pathway is porphyrin-containing compound metabolism; heme O biosynthesis; heme O from protoheme: step 1/1. Functionally, converts heme B (protoheme IX) to heme O by substitution of the vinyl group on carbon 2 of heme B porphyrin ring with a hydroxyethyl farnesyl side group. This chain is Protoheme IX farnesyltransferase, found in Methylobacterium sp. (strain 4-46).